Reading from the N-terminus, the 396-residue chain is Elongation factor Tu (396 aa).

Residues 10–205 form the tr-type G domain; the sequence is KSHANIGTIG…AVDEYIPTPE (196 aa). Residues 19–26 are G1; the sequence is GHVDHGKT. GTP is bound at residue 19–26; the sequence is GHVDHGKT. T26 serves as a coordination point for Mg(2+). Positions 61–65 are G2; it reads GITIS. A G3 region spans residues 82-85; sequence DCPG. GTP is bound by residues 82–86 and 137–140; these read DCPGH and NKCD. The interval 137-140 is G4; that stretch reads NKCD. A G5 region spans residues 175 to 177; it reads SAL.

The protein belongs to the TRAFAC class translation factor GTPase superfamily. Classic translation factor GTPase family. EF-Tu/EF-1A subfamily. As to quaternary structure, monomer.

Its subcellular location is the cytoplasm. The catalysed reaction is GTP + H2O = GDP + phosphate + H(+). In terms of biological role, GTP hydrolase that promotes the GTP-dependent binding of aminoacyl-tRNA to the A-site of ribosomes during protein biosynthesis. The protein is Elongation factor Tu of Bacillus velezensis (strain DSM 23117 / BGSC 10A6 / LMG 26770 / FZB42) (Bacillus amyloliquefaciens subsp. plantarum).